The sequence spans 309 residues: Porphobilinogen deaminase (309 aa).

Residue cysteine 241 is modified to S-(dipyrrolylmethanemethyl)cysteine.

It belongs to the HMBS family. As to quaternary structure, monomer. The cofactor is dipyrromethane.

It catalyses the reaction 4 porphobilinogen + H2O = hydroxymethylbilane + 4 NH4(+). The protein operates within porphyrin-containing compound metabolism; protoporphyrin-IX biosynthesis; coproporphyrinogen-III from 5-aminolevulinate: step 2/4. Functionally, tetrapolymerization of the monopyrrole PBG into the hydroxymethylbilane pre-uroporphyrinogen in several discrete steps. The protein is Porphobilinogen deaminase of Bacillus cereus (strain AH820).